The chain runs to 54 residues: ATP synthase F(0) complex subunit 8 (54 aa).

Residues 9–29 form a helical membrane-spanning segment; the sequence is WFMILFFSWVIFLTIIPTKII. The tract at residues 35–54 is disordered; it reads NDPTQVDAKEHKNDTWNWPW.

It belongs to the ATPase protein 8 family. Component of the ATP synthase complex composed at least of ATP5F1A/subunit alpha, ATP5F1B/subunit beta, ATP5MC1/subunit c (homooctomer), MT-ATP6/subunit a, MT-ATP8/subunit 8, ATP5ME/subunit e, ATP5MF/subunit f, ATP5MG/subunit g, ATP5MK/subunit k, ATP5MJ/subunit j, ATP5F1C/subunit gamma, ATP5F1D/subunit delta, ATP5F1E/subunit epsilon, ATP5PF/subunit F6, ATP5PB/subunit b, ATP5PD/subunit d, ATP5PO/subunit OSCP. ATP synthase complex consists of a soluble F(1) head domain (subunits alpha(3) and beta(3)) - the catalytic core - and a membrane F(0) domain - the membrane proton channel (subunits c, a, 8, e, f, g, k and j). These two domains are linked by a central stalk (subunits gamma, delta, and epsilon) rotating inside the F1 region and a stationary peripheral stalk (subunits F6, b, d, and OSCP).

The protein resides in the mitochondrion membrane. In terms of biological role, subunit 8, of the mitochondrial membrane ATP synthase complex (F(1)F(0) ATP synthase or Complex V) that produces ATP from ADP in the presence of a proton gradient across the membrane which is generated by electron transport complexes of the respiratory chain. ATP synthase complex consist of a soluble F(1) head domain - the catalytic core - and a membrane F(1) domain - the membrane proton channel. These two domains are linked by a central stalk rotating inside the F(1) region and a stationary peripheral stalk. During catalysis, ATP synthesis in the catalytic domain of F(1) is coupled via a rotary mechanism of the central stalk subunits to proton translocation. In vivo, can only synthesize ATP although its ATP hydrolase activity can be activated artificially in vitro. Part of the complex F(0) domain. The protein is ATP synthase F(0) complex subunit 8 of Danio rerio (Zebrafish).